The chain runs to 579 residues: Rho guanine nucleotide exchange factor 25 (579 aa).

2 disordered regions span residues 27–61 (AVPGQEGPQERDPLGPGSTKTESECTEEDQTGERE) and 172–194 (VKAQPAEEETLSQAPKNEEEQKK). The DH domain occupies 199-375 (RSMFVLSELV…CFVPKRCNDM (177 aa)). The tract at residues 317-338 (LGHRLQLSDLLIKPVQRIMKYQ) is important for binding to Rho GTPases. A PH domain is found at 380–499 (RLRGFEGKLT…ESQTNSLGRS (120 aa)). Residues 472–498 (SQRDFLNALQSPIEYQRRESQTNSLGR) form a sufficient to bind activated GNAQ region. Disordered stretches follow at residues 487–516 (QRRESQTNSLGRSGGPGVGSPGRMAQVSMH) and 546–579 (LSETPLTPYDPPALPTVNSPPGQARLAKLDEDEL).

In terms of assembly, interacts with activated GNAQ and GNA11. Interacts with RHOA, CDC42 and RAC1. Interacts (via the DH domain) with POPDC1 (via the C-terminus cytoplasmic tail).

Its subcellular location is the cytoplasm. It is found in the myofibril. The protein localises to the sarcomere. The protein resides in the cell membrane. Functionally, may play a role in actin cytoskeleton reorganization in different tissues since its activation induces formation of actin stress fibers. It works as a guanine nucleotide exchange factor for Rho family of small GTPases. Links specifically G alpha q/11-coupled receptors to RHOA activation. May be an important regulator of processes involved in axon and dendrite formation. In neurons seems to be an exchange factor primarily for RAC1. Involved in skeletal myogenesis. The polypeptide is Rho guanine nucleotide exchange factor 25 (Arhgef25) (Rattus norvegicus (Rat)).